We begin with the raw amino-acid sequence, 601 residues long: Elongation factor 4 (601 aa).

A tr-type G domain is found at 6-188; the sequence is NRIRNFCIIA…QVVTKIAPPK (183 aa). GTP contacts are provided by residues 18 to 23 and 135 to 138; these read DHGKST and NKID.

This sequence belongs to the TRAFAC class translation factor GTPase superfamily. Classic translation factor GTPase family. LepA subfamily.

It localises to the cell membrane. The catalysed reaction is GTP + H2O = GDP + phosphate + H(+). Functionally, required for accurate and efficient protein synthesis under certain stress conditions. May act as a fidelity factor of the translation reaction, by catalyzing a one-codon backward translocation of tRNAs on improperly translocated ribosomes. Back-translocation proceeds from a post-translocation (POST) complex to a pre-translocation (PRE) complex, thus giving elongation factor G a second chance to translocate the tRNAs correctly. Binds to ribosomes in a GTP-dependent manner. This Desulforamulus reducens (strain ATCC BAA-1160 / DSM 100696 / MI-1) (Desulfotomaculum reducens) protein is Elongation factor 4.